Reading from the N-terminus, the 95-residue chain is ESAT-6-like protein EsxA (95 aa).

The protein belongs to the WXG100 family. ESAT-6 subfamily. In terms of assembly, forms a tight 1:1 complex with EsxB.

This chain is ESAT-6-like protein EsxA, found in Corynebacterium diphtheriae (strain ATCC 700971 / NCTC 13129 / Biotype gravis).